The following is a 1106-amino-acid chain: DNA polymerase delta catalytic subunit (1106 aa).

Residues 1–28 (MDGKRRPGPGPGVPPKRARGGLWDEDEA) form a disordered region. The Nuclear localization signal signature appears at 4 to 19 (KRRPGPGPGVPPKRAR). Omega-N-methylarginine is present on Arg-19. Residue Lys-573 forms a Glycyl lysine isopeptide (Lys-Gly) (interchain with G-Cter in SUMO2) linkage. Zn(2+) is bound by residues Cys-1011, Cys-1014, Cys-1025, and Cys-1028. The CysA-type zinc finger occupies 1011 to 1028 (CIGCRTVLSHQGAVCKFC). Residues Cys-1057, Cys-1060, Cys-1070, and Cys-1075 each coordinate [4Fe-4S] cluster. A CysB motif motif is present at residues 1057–1075 (CQRCQGSLHEDVICTSRDC).

Belongs to the DNA polymerase type-B family. Component of the tetrameric DNA polymerase delta complex (Pol-delta4), which consists of POLD1/p125, POLD2/p50, POLD3/p66/p68 and POLD4/p12, with POLD1 bearing both DNA polymerase and 3' to 5' proofreading exonuclease activities. Within Pol-delta4, directly interacts with POLD2 and POLD4. Following genotoxic stress by DNA-damaging agents, such as ultraviolet light and methyl methanesulfonate, or by replication stress induced by treatment with hydroxyurea or aphidicolin, Pol-delta4 is converted into a trimeric form of the complex (Pol-delta3) by POLD4 degradation. Pol-delta3 is the major form at S phase replication sites and DNA damage sites. POLD1 displays different catalytic properties depending upon the complex it is found in. It exhibits higher proofreading activity and fidelity than Pol-delta4, making it particularly well suited to respond to DNA damage. Directly interacts with PCNA, as do POLD3 and POLD4; this interaction stimulates Pol-delta4 polymerase activity. As POLD2 and POLD4, directly interacts with WRNIP1; this interaction stimulates DNA polymerase delta-mediated DNA synthesis, independently of the presence of PCNA. This stimulation may be due predominantly to an increase of initiation frequency and also to increased processivity. Also observed as a dimeric complex with POLD2 (Pol-delta2). Pol-delta2 is relatively insensitive to the PCNA stimulation (2-5-fold) compared to Pol-delta4 that is stimulated by over 50-fold. Interacts with POLDIP2; this interaction is indirect and most probably mediated through POLD2-binding. Interacts with CIAO1. Interacts with POLDIP2. Interacts with RFC1. Requires [4Fe-4S] cluster as cofactor.

It is found in the nucleus. It catalyses the reaction DNA(n) + a 2'-deoxyribonucleoside 5'-triphosphate = DNA(n+1) + diphosphate. With respect to regulation, regulated by alteration of quaternary structure. Exhibits burst rates of DNA synthesis are about 5 times faster in the presence of POLD4 (Pol-delta4 complex) than in its absence (Pol-delta3 complex), while the affinity of the enzyme for its DNA and dNTP substrates appears unchanged. The Pol-delta3 complex is more likely to proofread DNA synthesis because it cleaves single-stranded DNA twice as fast and transfers mismatched DNA from the polymerase to the exonuclease sites 9 times faster compared to the Pol-delta3 complex. Pol-delta3 also extends mismatched primers 3 times more slowly in the absence of POLD4. The conversion of Pol-delta4 into Pol-delta3 is induced by genotoxic stress or by replication stress leading POLD4 degradation. Stimulated in the presence of PCNA. This stimulation is further increased in the presence of KCTD13/PDIP1, most probably via direct interaction between KCTD13 and POLD2. Its function is as follows. As the catalytic component of the trimeric (Pol-delta3 complex) and tetrameric DNA polymerase delta complexes (Pol-delta4 complex), plays a crucial role in high fidelity genome replication, including in lagging strand synthesis, and repair. Exhibits both DNA polymerase and 3'- to 5'-exonuclease activities. Requires the presence of accessory proteins POLD2, POLD3 and POLD4 for full activity. Depending upon the absence (Pol-delta3) or the presence of POLD4 (Pol-delta4), displays differences in catalytic activity. Most notably, expresses higher proofreading activity in the context of Pol-delta3 compared with that of Pol-delta4. Although both Pol-delta3 and Pol-delta4 process Okazaki fragments in vitro, Pol-delta3 may be better suited to fulfill this task, exhibiting near-absence of strand displacement activity compared to Pol-delta4 and stalling on encounter with the 5'-blocking oligonucleotides. Pol-delta3 idling process may avoid the formation of a gap, while maintaining a nick that can be readily ligated. Along with DNA polymerase kappa, DNA polymerase delta carries out approximately half of nucleotide excision repair (NER) synthesis following UV irradiation. Under conditions of DNA replication stress, in the presence of POLD3 and POLD4, may catalyze the repair of broken replication forks through break-induced replication (BIR). Involved in the translesion synthesis (TLS) of templates carrying O6-methylguanine, 8oxoG or abasic sites. The polypeptide is DNA polymerase delta catalytic subunit (POLD1) (Bos taurus (Bovine)).